The following is a 349-amino-acid chain: Nitrilase, bromoxynil-specific (349 aa).

The region spanning 5 to 274 is the CN hydrolase domain; sequence FKAAAVQAEP…EGIVYAEIDL (270 aa). The Proton acceptor role is filled by Glu45. The Proton donor role is filled by Lys127. Cys161 functions as the Nucleophile in the catalytic mechanism.

This sequence belongs to the carbon-nitrogen hydrolase superfamily. Nitrilase family. As to quaternary structure, homodimer.

It catalyses the reaction a nitrile + 2 H2O = a carboxylate + NH4(+). Specific for the herbicide bromoxynil (3,5-dibromo-4-hydroxybenzonitrile); converts it to its metabolite 3,5-dibromo-4-hydroxybenzoic acid. The chain is Nitrilase, bromoxynil-specific (bxn) from Klebsiella pneumoniae subsp. ozaenae.